Here is a 500-residue protein sequence, read N- to C-terminus: L-arabinose isomerase (500 aa).

E306, E333, H350, and H450 together coordinate Mn(2+).

This sequence belongs to the arabinose isomerase family. As to quaternary structure, homohexamer. It depends on Mn(2+) as a cofactor.

It carries out the reaction beta-L-arabinopyranose = L-ribulose. Its pathway is carbohydrate degradation; L-arabinose degradation via L-ribulose; D-xylulose 5-phosphate from L-arabinose (bacterial route): step 1/3. Functionally, catalyzes the conversion of L-arabinose to L-ribulose. The polypeptide is L-arabinose isomerase (Yersinia pseudotuberculosis serotype I (strain IP32953)).